The primary structure comprises 172 residues: MLSGLANPRQAAVQLMNFGLILSTAFMMWKGISVITDSPSPIVVVLSGSMEPAFQRGDLLFLWNRNVLAETSVGEIVVYNVKGKDIPIVHRIVRKFGKGPEAKLLTKGDNNVSDDTELYASGQDYLVRNDIIGSVFAYIPFVGYVTILLSEHPWLKTVMLGLMGLVVVLQRE.

The Cytoplasmic portion of the chain corresponds to 1-14 (MLSGLANPRQAAVQ). A helical; Signal-anchor for type II membrane protein transmembrane segment spans residues 15–35 (LMNFGLILSTAFMMWKGISVI). Residues 36–172 (TDSPSPIVVV…MGLVVVLQRE (137 aa)) are Lumenal-facing. Catalysis depends on charge relay system residues S49 and H90. The N-linked (GlcNAc...) asparagine glycan is linked to N111. The Charge relay system role is filled by D115. Positions 158–169 (VMLGLMGLVVVL) are C-terminal short (CTS) helix.

Belongs to the peptidase S26B family. Component of the signal peptidase complex (SPC) composed of a catalytic subunit SEC11 and three accessory subunits SPC1, SPC2 and SPC3. The complex induces a local thinning of the ER membrane which is used to measure the length of the signal peptide (SP) h-region of protein substrates. This ensures the selectivity of the complex towards h-regions shorter than 18-20 amino acids. SPC associates with the translocon complex.

The protein localises to the endoplasmic reticulum membrane. The enzyme catalyses Cleavage of hydrophobic, N-terminal signal or leader sequences from secreted and periplasmic proteins.. In terms of biological role, catalytic component of the signal peptidase complex (SPC) which catalyzes the cleavage of N-terminal signal sequences from nascent proteins as they are translocated into the lumen of the endoplasmic reticulum. Specifically cleaves N-terminal signal peptides that contain a hydrophobic alpha-helix (h-region) shorter than 18-20 amino acids. The sequence is that of Signal peptidase complex catalytic subunit sec11 (sec11) from Neurospora crassa (strain ATCC 24698 / 74-OR23-1A / CBS 708.71 / DSM 1257 / FGSC 987).